The sequence spans 362 residues: Prostaglandin F2-alpha receptor (362 aa).

The Extracellular portion of the chain corresponds to 1 to 31 (MSTNNSVQPVSPASELLSNTTCQLEEDLSIS). N-linked (GlcNAc...) asparagine glycosylation is found at Asn-4 and Asn-19. Residues 32–54 (FSIIFMTVGILSNSLAIAILMKA) form a helical membrane-spanning segment. Residues 55–69 (YQRFRQKYKSSFLLL) are Cytoplasmic-facing. The chain crosses the membrane as a helical span at residues 70-90 (ASALVITDFFGHLINGTIAVF). Topologically, residues 91-109 (VYASDKDWIYFDKSNILCS) are extracellular. The cysteines at positions 108 and 186 are disulfide-linked. A helical transmembrane segment spans residues 110-131 (IFGICMVFSGLCPLFLGSLMAI). Topologically, residues 132–152 (ERCIGVTKPIFHSTKITTKHV) are cytoplasmic. The chain crosses the membrane as a helical span at residues 153 to 175 (KMMLSGVCFFAVFVALLPILGHR). Residues 176–198 (DYKIQASRTWCFYKTDQIKDWED) lie on the Extracellular side of the membrane. The chain crosses the membrane as a helical span at residues 199-224 (RFYLLLFAFLGLLALGISFVCNAITG). Residues 225 to 250 (ISLLKVKFRSQQHRQGRSHHFEMVIQ) lie on the Cytoplasmic side of the membrane. A helical membrane pass occupies residues 251-267 (LLGIMCVSCICWSPFLV). Topologically, residues 268–285 (TMASIGMNIQDFKDSCER) are extracellular. A helical membrane pass occupies residues 286-307 (TLFTLRMATWNQILDPWVYILL). At 308-362 (RKAVLRNLYVCTRRCCGVHVISLHVWELSSIKNSLKVAAISDLPVTEKVTQQTST) the chain is on the cytoplasmic side.

This sequence belongs to the G-protein coupled receptor 1 family.

The protein localises to the cell membrane. Its function is as follows. Receptor for prostaglandin F2-alpha (PGF2-alpha). The activity of this receptor is mediated by G proteins which activate a phosphatidylinositol-calcium second messenger system. Initiates luteolysis in the corpus luteum. The chain is Prostaglandin F2-alpha receptor (PTGFR) from Ovis aries (Sheep).